We begin with the raw amino-acid sequence, 113 residues long: Ribosome-binding factor A (113 aa).

The protein belongs to the RbfA family. Monomer. Binds 30S ribosomal subunits, but not 50S ribosomal subunits or 70S ribosomes.

Its subcellular location is the cytoplasm. In terms of biological role, one of several proteins that assist in the late maturation steps of the functional core of the 30S ribosomal subunit. Associates with free 30S ribosomal subunits (but not with 30S subunits that are part of 70S ribosomes or polysomes). Required for efficient processing of 16S rRNA. May interact with the 5'-terminal helix region of 16S rRNA. The chain is Ribosome-binding factor A from Oceanobacillus iheyensis (strain DSM 14371 / CIP 107618 / JCM 11309 / KCTC 3954 / HTE831).